The following is a 931-amino-acid chain: MPPLKSPAAFHEQRRSLERARTEDYLKRKIRSRPERSELVRMHILEETSAEPSLQAKQLKLKRARLADDLNEKIAQRPGPMELVEKNILPVESSLKEAIIVGQVNYPKVADSSSFDEDSSDALSPEQPASHESQGSVPSPLEARVSEPLLSATSASPTQVVSQLPMGRDSREMLFLAEQPPLPPPPLLPPSLTNGTTIPTAKSTPTLIKQSQPKSASEKSQRSKKAKELKPKVKKLKYHQYIPPDQKQDRGAPPMDSSYAKILQQQQLFLQLQILNQQQQQHHNYQAILPAPPKSAGEALGSSGTPPVRSLSTTNSSSSSGAPGPCGLARQNSTSLTGKPGALPANLDDMKVAELKQELKLRSLPVSGTKTELIERLRAYQDQISPVPGAPKAPAATSILHKAGEVVVAFPAARLSTGPALVAAGLAPAEVVVATVASSGVVKFGSTGSTPPVSPTPSERSLLSTGDENSTPGDTFGEMVTSPLTQLTLQASPLQILVKEEGPRAGSCCLSPGGRAELEGRDKDQMLQEKDKQIEALTRMLRQKQQLVERLKLQLEQEKRAQQPAPAPAPLGTPVKQENSFSSCQLSQQPLGPAHPFNPSLAAPATNHIDPCAVAPGPPSVVVKQEALQPEPEPVPAPQLLLGPQGPSLIKGVAPPTLITDSTGTHLVLTVTNKNADSPGLSSGSPQQPSSQPGSPAPAPSAQMDLEHPLQPLFGTPTSLLKKEPPGYEEAMSQQPKQQENGSSSQQMDDLFDILIQSGEISADFKEPPSLPGKEKPSPKTVCGSPLAAQPSPSAELPQAAPPPPGSPSLPGRLEDFLESSTGLPLLTSGHDGPEPLSLIDDLHSQMLSSTAILDHPPSPMDTSELHFVPEPSSTMGLDLADGHLDSMDWLELSSGGPVLSLAPLSTTAPSLFSTDFLDGHDLQLHWDSCL.

The mediates interaction with SCAI and ACTB stretch occupies residues 1–256; that stretch reads MPPLKSPAAF…KQDRGAPPMD (256 aa). At S6 the chain carries Phosphoserine. The intervening spacer sequence 1 stretch occupies residues 6–23; that stretch reads SPAAFHEQRRSLERARTE. An RPEL 1 repeat occupies 24 to 49; it reads DYLKRKIRSRPERSELVRMHILEETS. A Bipartite Nuclear localization signal motif is present at residues 27–65; that stretch reads KRKIRSRPERSELVRMHILEETSAEPSLQAKQLKLKRAR. Residues 50 to 67 are intervening spacer sequence 2; the sequence is AEPSLQAKQLKLKRARLA. One copy of the RPEL 2 repeat lies at 68–93; sequence DDLNEKIAQRPGPMELVEKNILPVES. Disordered stretches follow at residues 110-256 and 290-344; these read ADSS…PPMD and PAPP…GALP. 3 positions are modified to phosphoserine: S124, S139, and S156. The segment covering 151–162 has biased composition (polar residues); it reads SATSASPTQVVS. The segment covering 180 to 189 has biased composition (pro residues); it reads PPLPPPPLLP. Positions 191–215 are enriched in polar residues; that stretch reads SLTNGTTIPTAKSTPTLIKQSQPKS. Over residues 216–231 the composition is skewed to basic and acidic residues; it reads ASEKSQRSKKAKELKP. T305 carries the post-translational modification Phosphothreonine. Phosphoserine is present on residues S310 and S312. The segment covering 310 to 320 has biased composition (low complexity); the sequence is SLSTTNSSSSS. T313 carries the post-translational modification Phosphothreonine. Phosphoserine is present on residues S317, S320, and S333. Residues 347-381 enclose the SAP domain; that stretch reads LDDMKVAELKQELKLRSLPVSGTKTELIERLRAYQ. 2 positions are modified to phosphoserine: S385 and S446. The interval 444–476 is disordered; the sequence is FGSTGSTPPVSPTPSERSLLSTGDENSTPGDTF. Position 447 is a phosphothreonine (T447). The residue at position 449 (S449) is a Phosphoserine. At T450 the chain carries Phosphothreonine. S454 carries the post-translational modification Phosphoserine. T456 carries the phosphothreonine modification. A Phosphoserine modification is found at S458. The span at 459 to 473 shows a compositional bias: polar residues; it reads ERSLLSTGDENSTPG. Phosphoserine is present on residues S482, S492, S507, and S511. Positions 515–563 form a coiled coil; that stretch reads RAELEGRDKDQMLQEKDKQIEALTRMLRQKQQLVERLKLQLEQEKRAQQ. Disordered stretches follow at residues 558 to 577, 674 to 746, and 763 to 816; these read EKRA…PVKQ, KNAD…SSSQ, and ADFK…RLED. Positions 678-694 are enriched in low complexity; it reads SPGLSSGSPQQPSSQPG. S685, S691, and S695 each carry phosphoserine. Residues 732–746 are compositionally biased toward polar residues; sequence MSQQPKQQENGSSSQ. Residues 763–778 show a composition bias toward basic and acidic residues; the sequence is ADFKEPPSLPGKEKPS. The span at 784 to 799 shows a compositional bias: low complexity; it reads GSPLAAQPSPSAELPQ. Phosphoserine occurs at positions 792, 807, and 859.

As to quaternary structure, interacts with SRF, forming the SRF-MRTFA nuclear complex which binds the 5'-CArG-3' consensus motif (CArG box) on DNA via SRF. Interacts (via RPEL repeats) with globular actin (G-actin), thereby regulating its subcellular location and activity of the complex formed with SRF. Either forms a trivalent (by binding three G-actin monomers) or pentavalent (by binding five G-actin monomers) complex with G-actin. Forms a nuclear ternary complex with SCAI and SRF, leading to suppress MRTFA-induced SRF transcriptional activity. Interacts with beta-actin (ACTB); interaction with ACTB prevents interaction with SCAI. Interacts with MRTFB. In terms of processing, phosphorylation at Ser-6 by Erk inhibits binding of globular actin (G-actin), unmasking the nuclear localization signal (NLS) and promoting nuclear import. In terms of tissue distribution, ubiquitously expressed, has been detected in lung, placenta, small intestine, liver, kidney, spleen, thymus, colon, muscle, heart and brain. Expressed in peripheral blood mononuclear cells (at protein level).

It is found in the cytoplasm. The protein resides in the nucleus. In terms of biological role, transcription coactivator that associates with the serum response factor (SRF) transcription factor to control expression of genes regulating the cytoskeleton during development, morphogenesis and cell migration. The SRF-MRTFA complex activity responds to Rho GTPase-induced changes in cellular globular actin (G-actin) concentration, thereby coupling cytoskeletal gene expression to cytoskeletal dynamics. MRTFA binds G-actin via its RPEL repeats, regulating activity of the MRTFA-SRF complex. Activity is also regulated by filamentous actin (F-actin) in the nucleus. The sequence is that of Myocardin-related transcription factor A from Homo sapiens (Human).